Consider the following 487-residue polypeptide: GTPase Der (487 aa).

EngA-type G domains follow at residues 3-167 and 203-378; these read FTLA…EGFA and LQIA…DIWN. GTP is bound by residues 9–16, 56–60, 119–122, 209–216, 256–260, and 321–324; these read GRPNVGKS, DTAGL, NKAE, GRPNAGKS, DTAGM, and NKWD. Residues 379–463 form the KH-like domain; the sequence is RRITTARLNS…PIRLTMRGQG (85 aa). Positions 459-487 are disordered; it reads MRGQGDKNPFKERKFRTPSRLRKHLGKKG. Residues 471–487 show a composition bias toward basic residues; that stretch reads RKFRTPSRLRKHLGKKG.

The protein belongs to the TRAFAC class TrmE-Era-EngA-EngB-Septin-like GTPase superfamily. EngA (Der) GTPase family. In terms of assembly, associates with the 50S ribosomal subunit.

In terms of biological role, GTPase that plays an essential role in the late steps of ribosome biogenesis. The sequence is that of GTPase Der from Cereibacter sphaeroides (strain ATCC 17025 / ATH 2.4.3) (Rhodobacter sphaeroides).